The chain runs to 616 residues: Proline--tRNA ligase (616 aa).

Belongs to the class-II aminoacyl-tRNA synthetase family. ProS type 1 subfamily. Homodimer.

The protein resides in the cytoplasm. The enzyme catalyses tRNA(Pro) + L-proline + ATP = L-prolyl-tRNA(Pro) + AMP + diphosphate. Catalyzes the attachment of proline to tRNA(Pro) in a two-step reaction: proline is first activated by ATP to form Pro-AMP and then transferred to the acceptor end of tRNA(Pro). As ProRS can inadvertently accommodate and process non-cognate amino acids such as alanine and cysteine, to avoid such errors it has two additional distinct editing activities against alanine. One activity is designated as 'pretransfer' editing and involves the tRNA(Pro)-independent hydrolysis of activated Ala-AMP. The other activity is designated 'posttransfer' editing and involves deacylation of mischarged Ala-tRNA(Pro). The misacylated Cys-tRNA(Pro) is not edited by ProRS. The polypeptide is Proline--tRNA ligase (Lactococcus lactis subsp. cremoris (strain MG1363)).